The following is a 150-amino-acid chain: Anthrone oxygenase gedH (150 aa).

Helical transmembrane passes span 1–21 (MANPAVGAMMGLSLVAVPVFL), 41–61 (GHKLMPTIAVATCALHGWVAA), 73–93 (PVLAAVTTITMVPFTWVCMVS), and 128–148 (LFPLAGAIVACQTLLKELVGG).

It belongs to the anthrone oxygenase family.

The protein resides in the membrane. The enzyme catalyses emodin anthrone + O2 = emodin + H2O + H(+). It functions in the pathway secondary metabolite biosynthesis. Functionally, anthrone oxygenase; part of the gene cluster that mediates the biosynthesis of geodin, an intermediate in the biosynthesis of other natural products. The pathway begins with the synthesis of atrochrysone thioester by the polyketide synthase (PKS) gedC. The atrochrysone carboxyl ACP thioesterase gedB then breaks the thioester bond and releases the atrochrysone carboxylic acid from gedC. The atrochrysone carboxylic acid is then converted to atrochrysone which is further transformed into emodin anthrone. The next step is performed by the emodin anthrone oxygenase gedH that catalyzes the oxidation of emodinanthrone to emodin. Emodin O-methyltransferase encoded probably by gedA then catalyzes methylation of the 8-hydroxy group of emodin to form questin. Ring cleavage of questin by questin oxidase gedK leads to desmethylsulochrin via several intermediates including questin epoxide. Another methylation step probably catalyzed by methyltransferase gedG leads to the formation of sulochrin which is further converted to dihydrogeodin by the sulochrin halogenase gedL. Finally, the dihydrogeodin oxidase gedJ catalyzes the stereospecific phenol oxidative coupling reaction converting dihydrogeodin to geodin. This chain is Anthrone oxygenase gedH, found in Aspergillus terreus (strain NIH 2624 / FGSC A1156).